Reading from the N-terminus, the 125-residue chain is uncharacterized protein (125 aa).

This is an uncharacterized protein from Escherichia coli (strain K12).